Here is a 422-residue protein sequence, read N- to C-terminus: Gamma-glutamyl phosphate reductase (422 aa).

This sequence belongs to the gamma-glutamyl phosphate reductase family.

It is found in the cytoplasm. The catalysed reaction is L-glutamate 5-semialdehyde + phosphate + NADP(+) = L-glutamyl 5-phosphate + NADPH + H(+). It functions in the pathway amino-acid biosynthesis; L-proline biosynthesis; L-glutamate 5-semialdehyde from L-glutamate: step 2/2. Functionally, catalyzes the NADPH-dependent reduction of L-glutamate 5-phosphate into L-glutamate 5-semialdehyde and phosphate. The product spontaneously undergoes cyclization to form 1-pyrroline-5-carboxylate. The sequence is that of Gamma-glutamyl phosphate reductase from Nitrosomonas eutropha (strain DSM 101675 / C91 / Nm57).